A 458-amino-acid chain; its full sequence is Cobyrinate a,c-diamide synthase (458 aa).

Residues 254-445 (KIGVIRDQVF…IHVHFLSDKS (192 aa)) enclose the GATase cobBQ-type domain. Residue cysteine 335 is the Nucleophile of the active site.

The protein belongs to the CobB/CbiA family. Mg(2+) is required as a cofactor.

It carries out the reaction cob(II)yrinate + 2 L-glutamine + 2 ATP + 2 H2O = cob(II)yrinate a,c diamide + 2 L-glutamate + 2 ADP + 2 phosphate + 2 H(+). It functions in the pathway cofactor biosynthesis; adenosylcobalamin biosynthesis; cob(II)yrinate a,c-diamide from sirohydrochlorin (anaerobic route): step 10/10. Catalyzes the ATP-dependent amidation of the two carboxylate groups at positions a and c of cobyrinate, using either L-glutamine or ammonia as the nitrogen source. In Archaeoglobus fulgidus (strain ATCC 49558 / DSM 4304 / JCM 9628 / NBRC 100126 / VC-16), this protein is Cobyrinate a,c-diamide synthase.